A 318-amino-acid polypeptide reads, in one-letter code: Small ribosomal subunit protein uS2 (318 aa).

This sequence belongs to the universal ribosomal protein uS2 family.

In Mesomycoplasma hyopneumoniae (strain J / ATCC 25934 / NCTC 10110) (Mycoplasma hyopneumoniae), this protein is Small ribosomal subunit protein uS2.